Reading from the N-terminus, the 215-residue chain is MSKIYDWFEERLEIQAIADDISSKYVPPHVNIFYCLGGIVFVSFLIQVATGFAMTFYYRPTVAEAFTSVEYIMTDVNFGWLIRSIHRWSASMMVLMMILHVFRVYLTGGFKKPRELTWVTGVILGVLTVSFGVTGYSLPWDQIGYWAVKIVTGVPDAVPVVGESIVELLRGGVSVGQGTLTRFYSLHTFVLPLLTAVFMLMHFLMIRKQGISGPL.

The chain crosses the membrane as a helical span at residues 32–52 (IFYCLGGIVFVSFLIQVATGF). Cys35 serves as a coordination point for heme c. Residues His86 and His100 each contribute to the heme b site. Transmembrane regions (helical) follow at residues 90 to 110 (ASMMVLMMILHVFRVYLTGGF), 116 to 136 (LTWVTGVILGVLTVSFGVTGY), and 186 to 206 (LHTFVLPLLTAVFMLMHFLMI). The heme b site is built by His187 and His202.

It belongs to the cytochrome b family. PetB subfamily. The 4 large subunits of the cytochrome b6-f complex are cytochrome b6, subunit IV (17 kDa polypeptide, PetD), cytochrome f and the Rieske protein, while the 4 small subunits are PetG, PetL, PetM and PetN. The complex functions as a dimer. It depends on heme b as a cofactor. Requires heme c as cofactor.

The protein localises to the plastid. It localises to the chloroplast thylakoid membrane. Component of the cytochrome b6-f complex, which mediates electron transfer between photosystem II (PSII) and photosystem I (PSI), cyclic electron flow around PSI, and state transitions. This Porphyra purpurea (Red seaweed) protein is Cytochrome b6.